Here is a 403-residue protein sequence, read N- to C-terminus: Flavohemoprotein (403 aa).

The region spanning 1–138 (MLTQKTKDIV…LADVLMGMES (138 aa)) is the Globin domain. Histidine 85 lines the heme b pocket. Residues tyrosine 95 and glutamate 137 each act as charge relay system in the active site. The reductase stretch occupies residues 149–403 (GGWKGWRTFV…EVFGPDLFAE (255 aa)). Positions 152-262 (KGWRTFVIRE…AAPYGSFHID (111 aa)) constitute an FAD-binding FR-type domain. FAD is bound by residues tyrosine 190 and 206–209 (RQYS). An NADP(+)-binding site is contributed by 275–280 (GVGLTP). Position 395–398 (395–398 (VFGP)) interacts with FAD.

Belongs to the globin family. Two-domain flavohemoproteins subfamily. The protein in the C-terminal section; belongs to the flavoprotein pyridine nucleotide cytochrome reductase family. As to quaternary structure, monomer. FAD is required as a cofactor. The cofactor is heme b.

The protein resides in the cytoplasm. The catalysed reaction is 2 nitric oxide + NADPH + 2 O2 = 2 nitrate + NADP(+) + H(+). It carries out the reaction 2 nitric oxide + NADH + 2 O2 = 2 nitrate + NAD(+) + H(+). Functionally, is involved in NO detoxification in an aerobic process, termed nitric oxide dioxygenase (NOD) reaction that utilizes O(2) and NAD(P)H to convert NO to nitrate, which protects the bacterium from various noxious nitrogen compounds. Therefore, plays a central role in the inducible response to nitrosative stress. In terms of biological role, in the presence of oxygen and NADH, FHP has NADH oxidase activity, which leads to the generation of superoxide and H(2)O(2), both in vitro and in vivo, and it has been suggested that FHP might act as an amplifier of superoxide stress. Under anaerobic conditions, FHP also exhibits nitric oxide reductase and FAD reductase activities. However, all these reactions are much lower than NOD activity. The sequence is that of Flavohemoprotein (hmp) from Cupriavidus necator (strain ATCC 17699 / DSM 428 / KCTC 22496 / NCIMB 10442 / H16 / Stanier 337) (Ralstonia eutropha).